The chain runs to 119 residues: UPF0342 protein GTNG_0551 (119 aa).

This sequence belongs to the UPF0342 family.

This chain is UPF0342 protein GTNG_0551, found in Geobacillus thermodenitrificans (strain NG80-2).